A 470-amino-acid polypeptide reads, in one-letter code: V-type proton ATPase subunit S1 (470 aa).

An N-terminal signal peptide occupies residues 1-41; it reads MMAAMATARVRMGPRCAQALWRMPWLPVFLSLAAAAAAAAA. Residues 42-231 constitute a propeptide that is removed on maturation; it reads EQQVPLVLWS…TAVRPSRVAR (190 aa). Residues 42–419 are Lumenal-facing; it reads EQQVPLVLWS…EQFSYASDCA (378 aa). N-linked (GlcNAc...) asparagine glycosylation is found at Asn-170, Asn-261, Asn-273, Asn-296, Asn-303, Asn-350, and Asn-357. A disulfide bond links Cys-371 and Cys-418. The helical transmembrane segment at 420–440 threads the bilayer; it reads SFFSPGIWMGLLTSLFMLFIF. The Cytoplasmic portion of the chain corresponds to 441 to 470; sequence TYGLHMILSLKTMDRFDDHKGPTISLTQIV. Ser-465 is modified (phosphoserine).

It belongs to the vacuolar ATPase subunit S1 family. As to quaternary structure, accessory component of the multisubunit proton-transporting vacuolar (V)-ATPase protein pump. Interacts (via N-terminus) with ATP6AP2 (via N-terminus). Interacts with RNASEK. Interacts with TMEM106B (via C-terminus). In terms of processing, N-glycosylated. As to expression, widely expressed, with highest levels in brain and lowest in liver and duodenum.

The protein resides in the endoplasmic reticulum membrane. It localises to the endoplasmic reticulum-Golgi intermediate compartment membrane. Its subcellular location is the cytoplasmic vesicle. It is found in the secretory vesicle. The protein localises to the synaptic vesicle membrane. The protein resides in the clathrin-coated vesicle membrane. Accessory subunit of the proton-transporting vacuolar (V)-ATPase protein pump, which is required for luminal acidification of secretory vesicles. Guides the V-type ATPase into specialized subcellular compartments, such as neuroendocrine regulated secretory vesicles or the ruffled border of the osteoclast, thereby regulating its activity. Involved in membrane trafficking and Ca(2+)-dependent membrane fusion. May play a role in the assembly of the V-type ATPase complex. In aerobic conditions, involved in intracellular iron homeostasis, thus triggering the activity of Fe(2+) prolyl hydroxylase (PHD) enzymes, and leading to HIF1A hydroxylation and subsequent proteasomal degradation. In islets of Langerhans cells, may regulate the acidification of dense-core secretory granules. The chain is V-type proton ATPase subunit S1 (ATP6AP1) from Homo sapiens (Human).